A 445-amino-acid chain; its full sequence is Trigger factor (445 aa).

In terms of domain architecture, PPIase FKBP-type spans 162 to 247; sequence GDQVTIDAIG…IKAVHTAEPT (86 aa).

Belongs to the FKBP-type PPIase family. Tig subfamily.

It is found in the cytoplasm. It catalyses the reaction [protein]-peptidylproline (omega=180) = [protein]-peptidylproline (omega=0). Its function is as follows. Involved in protein export. Acts as a chaperone by maintaining the newly synthesized protein in an open conformation. Functions as a peptidyl-prolyl cis-trans isomerase. The sequence is that of Trigger factor from Rickettsia akari (strain Hartford).